A 213-amino-acid polypeptide reads, in one-letter code: Putative 3-methyladenine DNA glycosylase (213 aa).

Belongs to the DNA glycosylase MPG family.

This Leifsonia xyli subsp. xyli (strain CTCB07) protein is Putative 3-methyladenine DNA glycosylase.